The following is a 222-amino-acid chain: Chymotrypsin-1 (222 aa).

Positions 1 to 221 (IVGGKDAPVG…FVSWINANLK (221 aa)) constitute a Peptidase S1 domain. A disulfide bridge connects residues Cys26 and Cys42. Active-site charge relay system residues include His41 and Asp87. 2 cysteine pairs are disulfide-bonded: Cys151-Cys164 and Cys174-Cys198. Ser178 functions as the Charge relay system in the catalytic mechanism.

Belongs to the peptidase S1 family.

The protein resides in the secreted. It localises to the extracellular space. The catalysed reaction is Preferential cleavage: Tyr-|-Xaa, Trp-|-Xaa, Phe-|-Xaa, Leu-|-Xaa.. This chain is Chymotrypsin-1, found in Solenopsis invicta (Red imported fire ant).